Reading from the N-terminus, the 144-residue chain is uncharacterized protein (144 aa).

This sequence belongs to the mimivirus L885/R898 family.

This is an uncharacterized protein from Acanthamoeba polyphaga (Amoeba).